The primary structure comprises 180 residues: Prothoracicotropic hormone (180 aa).

The signal sequence occupies residues 1–15 (MKLLILCVMVHGLLA). Residues 16–64 (EGPGQVLWKEQVVAPEFLLDDREDIASNRNAFFYEDKRSFRPEGLGEQV) constitute a propeptide that is removed on maturation. Disulfide bonds link cysteine 88–cysteine 123 and cysteine 111–cysteine 175.

In terms of assembly, homodimer; disulfide-linked.

The protein localises to the secreted. Functionally, PTTH is a brain secretory polypeptide of insects which stimulates the prothoracic glands to produce and release ecdysone, the steroid essential to insect development. This is Prothoracicotropic hormone from Camponotus floridanus (Florida carpenter ant).